The sequence spans 586 residues: Arginine--tRNA ligase (586 aa).

The 'HIGH' region signature appears at 133-143 (ANPTGPLNIVS).

Belongs to the class-I aminoacyl-tRNA synthetase family. In terms of assembly, monomer.

The protein resides in the cytoplasm. The enzyme catalyses tRNA(Arg) + L-arginine + ATP = L-arginyl-tRNA(Arg) + AMP + diphosphate. The chain is Arginine--tRNA ligase from Leptospira interrogans serogroup Icterohaemorrhagiae serovar Lai (strain 56601).